The chain runs to 845 residues: Protein P (845 aa).

The interval 1 to 179 (MPLSYQHFRK…FCGSPYSWEQ (179 aa)) is terminal protein domain (TP). Residues 180 to 348 (ELHHGRSVTK…YCLSHLVNLL (169 aa)) form a spacer region. 3 disordered regions span residues 186–205 (SVTK…QPSG), 222–245 (QPRL…SGSI), and 288–318 (YSHL…RSQS). Positions 289–301 (SHLSTSKRQSSSG) are enriched in polar residues. The segment at 349–692 (EDWGPCADHG…YMNLYPVARQ (344 aa)) is polymerase/reverse transcriptase domain (RT). One can recognise a Reverse transcriptase domain in the interval 359–602 (EHHIRIPRTP…YSLNFMGYII (244 aa)). Mg(2+)-binding residues include D431, D553, and D554.

The protein belongs to the hepadnaviridae P protein family.

It carries out the reaction DNA(n) + a 2'-deoxyribonucleoside 5'-triphosphate = DNA(n+1) + diphosphate. It catalyses the reaction Endonucleolytic cleavage to 5'-phosphomonoester.. Its activity is regulated as follows. Activated by host HSP70 and HSP40 in vitro to be able to bind the epsilon loop of the pgRNA. Because deletion of the RNase H region renders the protein partly chaperone-independent, the chaperones may be needed indirectly to relieve occlusion of the RNA-binding site by this domain. Inhibited by several reverse-transcriptase inhibitors: Lamivudine, Adefovir and Entecavir. In terms of biological role, multifunctional enzyme that converts the viral RNA genome into dsDNA in viral cytoplasmic capsids. This enzyme displays a DNA polymerase activity that can copy either DNA or RNA templates, and a ribonuclease H (RNase H) activity that cleaves the RNA strand of RNA-DNA heteroduplexes in a partially processive 3'- to 5'-endonucleasic mode. Neo-synthesized pregenomic RNA (pgRNA) are encapsidated together with the P protein, and reverse-transcribed inside the nucleocapsid. Initiation of reverse-transcription occurs first by binding the epsilon loop on the pgRNA genome, and is initiated by protein priming, thereby the 5'-end of (-)DNA is covalently linked to P protein. Partial (+)DNA is synthesized from the (-)DNA template and generates the relaxed circular DNA (RC-DNA) genome. After budding and infection, the RC-DNA migrates in the nucleus, and is converted into a plasmid-like covalently closed circular DNA (cccDNA). The activity of P protein does not seem to be necessary for cccDNA generation, and is presumably released from (+)DNA by host nuclear DNA repair machinery. This chain is Protein P, found in Hepatitis B virus genotype A3 (isolate Cameroon/CMR711/1994) (HBV-A).